We begin with the raw amino-acid sequence, 571 residues long: MGERFDKYEYLQDLMRRRGFAWGSFEIYGGSRGFYDYGPLGATIKRKIEKKIREAFIREGFFEIETPDITPEQVFIASGHVEKFVDPIVECKKCGARFRADHLIEETLGIDVEGKSAEEMTKIIREHNIKCPECGGELGDVFYFNLMFETYIGPYKDKKAYLRPETAQGIFVNFKRLNAFARNKLPFGVFQIGKAYRNEISPRQGMIRLREFTQAEVEIFFNPNETEHPHFDEVKHEKLRLYPIENQLKDLGMIELTAEEAVKKGYLMNTFFAYYLVMIKKILLDIGIPEDKIRFRQQLPEERAHYSADTWDAEVYSERFGWVECVGLAYRTDYDLSRHMKMSGADLTVMIHYDKPKIVKRLKVSLNMKSVGPKLKKDAKRINEKIQAMSEEELRELVKKLNEEGKIVIDGYELSKDDFIIKEVEEKVTGEKIIPHVLEPSFGIDRPFYLLLENSLTIDEDGRIYLKIKKDMAPIEVAVLPLVAKEPLTKIAYDLFRKLQKEGFIVVYDEKDSIGKRYMRYDEIGTPYCVTIDNQTPIDGTVTIRDRDTREQIRVKLEDVPRKLKELIFGS.

Substrate is bound by residues arginine 99 and glutamate 165. Residues 197-199 (RNE), 207-212 (IRLREF), 324-325 (EC), and 443-446 (GIDR) contribute to the ATP site. 212-216 (FTQAE) provides a ligand contact to substrate. 439-443 (EPSFG) is a binding site for substrate.

This sequence belongs to the class-II aminoacyl-tRNA synthetase family.

The protein localises to the cytoplasm. The catalysed reaction is tRNA(Gly) + glycine + ATP = glycyl-tRNA(Gly) + AMP + diphosphate. Functionally, catalyzes the attachment of glycine to tRNA(Gly). The sequence is that of Glycine--tRNA ligase from Pyrococcus abyssi (strain GE5 / Orsay).